The primary structure comprises 853 residues: NADH-quinone oxidoreductase subunit G 2 (853 aa).

Residues 1–78 enclose the 2Fe-2S ferredoxin-type domain; that stretch reads MIKVTIDEQS…GMVVRTNTPL (78 aa). The [2Fe-2S] cluster site is built by Cys34, Cys45, Cys48, and Cys62. One can recognise a 4Fe-4S His(Cys)3-ligated-type domain in the interval 78–117; it reads LIEETRSSMLDMLLANHPLDCPICDKGGECELQDMVMAYG. [4Fe-4S] cluster is bound by residues His94, Cys98, Cys101, Cys107, Cys148, Cys151, Cys154, Cys198, Cys224, Cys227, Cys231, and Cys259. 2 consecutive 4Fe-4S ferredoxin-type domains span residues 139–170 and 179–209; these read PVII…LGTV and TGFE…FPYR. A 4Fe-4S Mo/W bis-MGD-type domain is found at 217 to 273; sequence LAETDTICPHCGTGCQLTVGARKGEFMRVRSDWEHGVNRETLCVRGRFGLDFIESRD.

Belongs to the complex I 75 kDa subunit family. It depends on [2Fe-2S] cluster as a cofactor. [4Fe-4S] cluster is required as a cofactor.

The enzyme catalyses a quinone + NADH + 5 H(+)(in) = a quinol + NAD(+) + 4 H(+)(out). In terms of biological role, NDH-1 shuttles electrons from NADH, via FMN and iron-sulfur (Fe-S) centers, to quinones in the respiratory chain. The immediate electron acceptor for the enzyme in this species is believed to be ubiquinone. Couples the redox reaction to proton translocation (for every two electrons transferred, four hydrogen ions are translocated across the cytoplasmic membrane), and thus conserves the redox energy in a proton gradient. The polypeptide is NADH-quinone oxidoreductase subunit G 2 (nuoG2) (Rhizobium meliloti (strain 1021) (Ensifer meliloti)).